A 336-amino-acid polypeptide reads, in one-letter code: Dihydroorotate dehydrogenase (quinone) (336 aa).

FMN is bound by residues 62 to 66 (AGLDK) and Thr86. Lys66 serves as a coordination point for substrate. 111–115 (NRMGF) lines the substrate pocket. FMN is bound by residues Asn139 and Asn172. Asn172 provides a ligand contact to substrate. Catalysis depends on Ser175, which acts as the Nucleophile. Residue Asn177 coordinates substrate. FMN is bound by residues Lys217 and Thr245. 246–247 (NT) contacts substrate. FMN is bound by residues Gly268, Gly297, and 318-319 (YS).

The protein belongs to the dihydroorotate dehydrogenase family. Type 2 subfamily. In terms of assembly, monomer. FMN is required as a cofactor.

The protein localises to the cell membrane. It carries out the reaction (S)-dihydroorotate + a quinone = orotate + a quinol. Its pathway is pyrimidine metabolism; UMP biosynthesis via de novo pathway; orotate from (S)-dihydroorotate (quinone route): step 1/1. Functionally, catalyzes the conversion of dihydroorotate to orotate with quinone as electron acceptor. The chain is Dihydroorotate dehydrogenase (quinone) from Escherichia coli (strain SE11).